We begin with the raw amino-acid sequence, 521 residues long: Calcium-dependent protein kinase 33 (521 aa).

Residue G2 is the site of N-myristoyl glycine attachment. Positions 15–56 (PQQNGERSVEIENRRRSTHQDPSKISTGTNQPPPWRNPAKHS) are disordered. Positions 21–36 (RSVEIENRRRSTHQDP) are enriched in basic and acidic residues. One can recognise a Protein kinase domain in the interval 73 to 331 (YTLSKELGRG…AAEVLKHPWL (259 aa)). Residues 79–87 (LGRGQFGVT) and K102 each bind ATP. Catalysis depends on D197, which acts as the Proton acceptor. The residue at position 237 (S237) is a Phosphoserine. Positions 337-367 (ASDKPIDSAVLSRMKQFRAMNKLKKLALKVI) are autoinhibitory domain. 4 consecutive EF-hand domains span residues 374–409 (EEIQ…LGSR), 410–445 (LTEA…RHRL), 446–481 (ESNE…YGMG), and 482–516 (DDAT…GNPQ). Ca(2+) contacts are provided by D387, D389, S391, T393, E398, D423, D425, N427, S429, E434, D459, D461, S463, Y465, E470, D494, D496, D498, R500, and E505.

This sequence belongs to the protein kinase superfamily. Ser/Thr protein kinase family. CDPK subfamily. Interacts with THI1. Interacts with FD and FDP. Post-translationally, autophosphorylated. Expressed in primary roots, leaves, inflorescences, siliques and guard cells. Expressed in the shoot apical meristem.

The protein localises to the cell membrane. It is found in the nucleus. It localises to the cytoplasm. It catalyses the reaction L-seryl-[protein] + ATP = O-phospho-L-seryl-[protein] + ADP + H(+). The catalysed reaction is L-threonyl-[protein] + ATP = O-phospho-L-threonyl-[protein] + ADP + H(+). With respect to regulation, activated by calcium. Autophosphorylation may play an important role in the regulation of the kinase activity. Repressed by THI1 through a negative regulation of the autophosphorylation activity in the presence of Ca(2+). Its function is as follows. Ca(2+)-dependent protein kinase. Negative regulator of stomatal closure and slow anion currents. Unable to phosphorylate THI1 in vitro, but the kinase activity is essential for the stomatal closure regulation. Phosphorylates FD. May play a role in signal transduction pathways that involve calcium as a second messenger. The protein is Calcium-dependent protein kinase 33 of Arabidopsis thaliana (Mouse-ear cress).